The chain runs to 188 residues: Peptide deformylase (188 aa).

The segment at 70–90 (AEPVACDHDGHHHHHQPTKKE) is disordered. Residues cysteine 113 and histidine 155 each coordinate Fe cation. Glutamate 156 is an active-site residue. Histidine 159 is a binding site for Fe cation.

This sequence belongs to the polypeptide deformylase family. Fe(2+) is required as a cofactor.

It carries out the reaction N-terminal N-formyl-L-methionyl-[peptide] + H2O = N-terminal L-methionyl-[peptide] + formate. Functionally, removes the formyl group from the N-terminal Met of newly synthesized proteins. Requires at least a dipeptide for an efficient rate of reaction. N-terminal L-methionine is a prerequisite for activity but the enzyme has broad specificity at other positions. The protein is Peptide deformylase of Novosphingobium aromaticivorans (strain ATCC 700278 / DSM 12444 / CCUG 56034 / CIP 105152 / NBRC 16084 / F199).